The primary structure comprises 107 residues: Ig kappa chain V-VI region TEPC 601/TEPC 191 (107 aa).

The segment at 1 to 23 (EIVLTQSPAITAASLGQKVTITC) is framework-1. Residues Cys-23 and Cys-87 are joined by a disulfide bond. The segment at 24-33 (SASSSVSYMH) is complementarity-determining-1. A framework-2 region spans residues 34 to 48 (WYQQKSGTSPKPWIY). The interval 49 to 55 (EISKLAS) is complementarity-determining-2. Residues 56–87 (GVPARFSGSGSGTSYSLTISSMEAEDAAIYYC) form a framework-3 region. Positions 88–96 (QQWNYPLIT) are complementarity-determining-3. The framework-4 stretch occupies residues 97–106 (FGAGTKLELK).

The polypeptide is Ig kappa chain V-VI region TEPC 601/TEPC 191 (Mus musculus (Mouse)).